Reading from the N-terminus, the 115-residue chain is UPF0342 protein Bsph_0375 (115 aa).

The protein belongs to the UPF0342 family.

This is UPF0342 protein Bsph_0375 from Lysinibacillus sphaericus (strain C3-41).